The sequence spans 239 residues: Ribonuclease PH (239 aa).

Residues Arg86 and 124–126 contribute to the phosphate site; that span reads GTR.

Belongs to the RNase PH family. As to quaternary structure, homohexameric ring arranged as a trimer of dimers.

It carries out the reaction tRNA(n+1) + phosphate = tRNA(n) + a ribonucleoside 5'-diphosphate. Functionally, phosphorolytic 3'-5' exoribonuclease that plays an important role in tRNA 3'-end maturation. Removes nucleotide residues following the 3'-CCA terminus of tRNAs; can also add nucleotides to the ends of RNA molecules by using nucleoside diphosphates as substrates, but this may not be physiologically important. Probably plays a role in initiation of 16S rRNA degradation (leading to ribosome degradation) during starvation. This Rickettsia bellii (strain OSU 85-389) protein is Ribonuclease PH.